Consider the following 197-residue polypeptide: Recombination protein RecR (197 aa).

The C4-type zinc finger occupies Cys-57 to Cys-72. The Toprim domain occupies Thr-79–Pro-174.

Belongs to the RecR family.

May play a role in DNA repair. It seems to be involved in an RecBC-independent recombinational process of DNA repair. It may act with RecF and RecO. This chain is Recombination protein RecR, found in Geotalea daltonii (strain DSM 22248 / JCM 15807 / FRC-32) (Geobacter daltonii).